A 357-amino-acid chain; its full sequence is Glucose-6-phosphatase catalytic subunit 1 (357 aa).

At Met1–Asp28 the chain is on the lumenal side. The chain crosses the membrane as a helical span at residues Trp29–Ile49. At Trp50–Lys60 the chain is on the cytoplasmic side. A helical membrane pass occupies residues Leu61–Gly81. Over Gln82–Ser117 the chain is Lumenal. Arg83 is a binding site for substrate. Asn96 carries an N-linked (GlcNAc...) asparagine glycan. A helical membrane pass occupies residues Gly118–Phe138. His119 (proton donor) is an active-site residue. Over Arg139–Arg147 the chain is Cytoplasmic. A helical membrane pass occupies residues Phe148 to Leu168. The Lumenal segment spans residues Ser169–Arg170. Substrate is bound at residue Arg170. A helical membrane pass occupies residues Ile171–Val191. Catalysis depends on His176, which acts as the Nucleophile. The Cytoplasmic segment spans residues Ala192 to Tyr209. A helical membrane pass occupies residues Phe210 to Leu230. The Lumenal portion of the chain corresponds to Gly231–Asp254. Residues Thr255–Leu275 traverse the membrane as a helical segment. Over Asn276–Trp291 the chain is Cytoplasmic. A helical transmembrane segment spans residues Phe292–Leu312. Residues Lys313–Leu320 lie on the Lumenal side of the membrane. A helical transmembrane segment spans residues Ile321 to Ile341. At Pro342–Leu357 the chain is on the cytoplasmic side. A Prevents secretion from ER motif is present at residues Lys354 to Leu357.

It belongs to the glucose-6-phosphatase family.

Its subcellular location is the endoplasmic reticulum membrane. It carries out the reaction D-glucose 6-phosphate + H2O = D-glucose + phosphate. Its pathway is carbohydrate biosynthesis; gluconeogenesis. Hydrolyzes glucose-6-phosphate to glucose in the endoplasmic reticulum. Forms with the glucose-6-phosphate transporter (SLC37A4/G6PT) the complex responsible for glucose production in the terminal step of glycogenolysis and gluconeogenesis. Hence, it is the key enzyme in homeostatic regulation of blood glucose levels. The chain is Glucose-6-phosphatase catalytic subunit 1 (G6PC1) from Felis catus (Cat).